We begin with the raw amino-acid sequence, 277 residues long: Large ribosomal subunit protein uL2 (277 aa).

Disordered regions lie at residues 32 to 58 and 225 to 277; these read KSLT…RGGG and VAMN…RRNN.

The protein belongs to the universal ribosomal protein uL2 family. As to quaternary structure, part of the 50S ribosomal subunit. Forms a bridge to the 30S subunit in the 70S ribosome.

Functionally, one of the primary rRNA binding proteins. Required for association of the 30S and 50S subunits to form the 70S ribosome, for tRNA binding and peptide bond formation. It has been suggested to have peptidyltransferase activity; this is somewhat controversial. Makes several contacts with the 16S rRNA in the 70S ribosome. The sequence is that of Large ribosomal subunit protein uL2 from Borrelia recurrentis (strain A1).